A 787-amino-acid polypeptide reads, in one-letter code: LPS-assembly protein LptD (787 aa).

An N-terminal signal peptide occupies residues 1–39 (MPRKTLLPLVPACDAAPRRKRLAAALLAVPGLVPAVSQA).

Belongs to the LptD family. In terms of assembly, component of the lipopolysaccharide transport and assembly complex. Interacts with LptE and LptA.

The protein resides in the cell outer membrane. Functionally, together with LptE, is involved in the assembly of lipopolysaccharide (LPS) at the surface of the outer membrane. This is LPS-assembly protein LptD from Burkholderia thailandensis (strain ATCC 700388 / DSM 13276 / CCUG 48851 / CIP 106301 / E264).